Consider the following 210-residue polypeptide: Mating-type-like protein ALPHA2, silenced copy at MTL3 (210 aa).

The segment at residues 108–170 is a DNA-binding region (homeobox; TALE-type); the sequence is ASYRGHRFTR…NRRRKQKSIY (63 aa).

Belongs to the TALE/M-ATYP homeobox family.

Its subcellular location is the nucleus. Mating type proteins are sequence specific DNA-binding proteins that act as master switches in yeast differentiation by controlling gene expression in a cell type-specific fashion. This is Mating-type-like protein ALPHA2, silenced copy at MTL3 (MTL3alpha2) from Candida glabrata (strain ATCC 2001 / BCRC 20586 / JCM 3761 / NBRC 0622 / NRRL Y-65 / CBS 138) (Yeast).